The chain runs to 450 residues: uncharacterized protein (450 aa).

The segment covering 141 to 151 (WLDKTDGEKNS) has biased composition (basic and acidic residues). Disordered stretches follow at residues 141-171 (WLDK…DSAG), 276-298 (LQDS…AVSQ), and 395-416 (DDED…LSRN). The segment covering 152-171 (EASSTDNSLENSTKGADSAG) has biased composition (polar residues). Over residues 283–298 (QGDKGEKESKDDAVSQ) the composition is skewed to basic and acidic residues. Over residues 395–411 (DDEDEDNVDNSEGDEES) the composition is skewed to acidic residues.

This is an uncharacterized protein from Saccharomyces cerevisiae (strain ATCC 204508 / S288c) (Baker's yeast).